A 423-amino-acid chain; its full sequence is Alpha-1-antichymotrypsin (423 aa).

A signal peptide spans 1–23 (MERMLPFLALGLLVAGFCPAVLC). N-linked (GlcNAc...) asparagine glycosylation is found at asparagine 93, asparagine 106, asparagine 127, asparagine 186, and asparagine 271. Residues 369 to 394 (GTEASAATAVKITLLSALVDPMTIVR) form an RCL region.

The protein belongs to the serpin family. In terms of assembly, interacts with DNAJC1. Plasma.

It localises to the secreted. Although its physiological function is unclear, it can inhibit neutrophil cathepsin G and mast cell chymase, both of which can convert angiotensin-1 to the active angiotensin-2. The polypeptide is Alpha-1-antichymotrypsin (SERPINA3) (Pongo abelii (Sumatran orangutan)).